A 380-amino-acid chain; its full sequence is MVWTSRICFRKYGNFVDNVRLYVRGGTGGMGLPRLGGHGGDGGDVWVVAKKDTRLKQIKDKHPDKRFIAGVGSNSSIQALRGAKGEDVEVFAPTGISVTSDHGRMLGELNREGDKLLVAKGGRGGSPQSGFLPNKGQTRNIRLDLKLIADFGLVGFPNAGKSSLLTALSHAKPKIANYPFTTIKPEIGKVMYDDHKQVSVADLPGLIEGAHVNKGMGHKFLKHVERTKQLMFVVDVCGFQLASKTPFRSAFETVLLLSKELELYKEELLSKPAILVINKMDLPEAQSHFQELEAQLENQGESIHLFSEDVIPKSLMHFTHIVPVSAMTGHGLPLLKSLIRQSLEEQDTIDTEAQRSQKILELRREIPSSSIPSWGLPQPT.

An Obg domain is found at 13-148 (GNFVDNVRLY…RNIRLDLKLI (136 aa)). Positions 149–344 (ADFGLVGFPN…LKSLIRQSLE (196 aa)) constitute an OBG-type G domain. GTP contacts are provided by residues 155-162 (GFPNAGKS), 202-206 (DLPGL), and 278-281 (NKMD).

It belongs to the TRAFAC class OBG-HflX-like GTPase superfamily. OBG GTPase family.

It is found in the nucleus. The protein localises to the nucleolus. In terms of biological role, may be involved in the ribosome maturation process. This is GTP-binding protein 10 (gtpbp10) from Danio rerio (Zebrafish).